A 239-amino-acid polypeptide reads, in one-letter code: Leucine rich adaptor protein 1 (239 aa).

2 LRR repeats span residues 55–83 (LGDK…LVTL) and 93–114 (LLEE…QYSL). Low complexity predominate over residues 107–118 (LTSSQYSLTGGS). The interval 107 to 140 (LTSSQYSLTGGSPERSRRGSWDSLPDTSSTDRLD) is disordered. 3 positions are modified to phosphoserine: Ser-118, Ser-126, and Ser-129.

As to quaternary structure, forms a tripartite complex with CDC42BPA/CDC42BPB and MYO18A acting as an adapter connecting both. Its binding to CDC42BPA/CDC42BPB results in their activation by abolition of their negative autoregulation. Interacts with CDC42BPA and CDC42BPB. In terms of processing, phosphorylated.

Its subcellular location is the cytoplasm. In terms of biological role, acts as an activator of the canonical NF-kappa-B pathway and drive the production of pro-inflammatory cytokines. Promotes the antigen (Ag)-presenting and priming function of dendritic cells via the canonical NF-kappa-B pathway. In concert with MYO18A and CDC42BPA/CDC42BPB, is involved in modulating lamellar actomyosin retrograde flow that is crucial to cell protrusion and migration. Activates CDC42BPA/CDC42BPB and targets it to actomyosin through its interaction with MYO18A, leading to MYL9/MLC2 phosphorylation and MYH9/MYH10-dependent actomyosin assembly in the lamella. This chain is Leucine rich adaptor protein 1 (Lurap1), found in Rattus norvegicus (Rat).